A 1026-amino-acid polypeptide reads, in one-letter code: Multidrug resistance protein MdtC (1026 aa).

A run of 11 helical transmembrane segments spans residues 16-36 (LLAL…PVAP), 333-353 (EVEQ…FLFL), 360-380 (LIPA…IYLC), 387-407 (LSLM…IVVL), 435-455 (VFSI…MGGI), 459-479 (LFHE…LIAL), 528-548 (WVLL…ISIP), 853-873 (LLLI…LYES), 897-917 (LFNA…IGLV), 953-973 (PILM…FSYG), and 984-1004 (ITIV…TPVV).

The protein belongs to the resistance-nodulation-cell division (RND) (TC 2.A.6) family. MdtC subfamily. As to quaternary structure, part of a tripartite efflux system composed of MdtA, MdtB and MdtC. MdtC forms a heteromultimer with MdtB.

It is found in the cell inner membrane. The protein is Multidrug resistance protein MdtC of Edwardsiella ictaluri (strain 93-146).